Consider the following 707-residue polypeptide: Glucose starvation modulator protein 1 (707 aa).

Positions 20–48 form a DNA-binding region, zn(2)-C6 fungal-type; it reads CTFCHQKHLQCSNERPCKNCVKRNIADQC. Disordered stretches follow at residues 63-122, 154-188, 260-283, and 385-404; these read NSKA…PNDL, QPTH…PPES, DQQQ…GPSH, and NVSS…SAIA. Low complexity-rich tracts occupy residues 66–79 and 91–104; these read AVAA…TTTT and SPSI…ISPI. Polar residues-rich tracts occupy residues 105–114 and 154–172; these read NTSTFDTNGH and QPTH…QVQP. A compositionally biased stretch (low complexity) spans 178–188; that stretch reads SSVPPSAPPES. The segment covering 260–274 has biased composition (polar residues); the sequence is DQQQSSSEATGTSAS. The PAS domain maps to 522-591; that stretch reads DYEKLSQLNS…FQLFKSVAVG (70 aa). Over residues 621–652 the composition is skewed to low complexity; that stretch reads NYNNNYNHNYSHNNNNNNNSNNSNNNGMSTGA. Residues 621–659 are disordered; sequence NYNNNYNHNYSHNNNNNNNSNNSNNNGMSTGAGNSGDGD.

It belongs to the ERT1/acuK family.

Its subcellular location is the nucleus. Functionally, transcription factor which regulates nonfermentable carbon utilization. The protein is Glucose starvation modulator protein 1 (GSM1) of Lodderomyces elongisporus (strain ATCC 11503 / CBS 2605 / JCM 1781 / NBRC 1676 / NRRL YB-4239) (Yeast).